We begin with the raw amino-acid sequence, 50 residues long: Insulin (50 aa).

3 disulfides stabilise this stretch: Cys-7–Cys-36, Cys-19–Cys-49, and Cys-35–Cys-40.

Belongs to the insulin family. In terms of assembly, heterodimer of a B chain and an A chain linked by two disulfide bonds.

It localises to the secreted. Insulin decreases blood glucose concentration. It increases cell permeability to monosaccharides, amino acids and fatty acids. It accelerates glycolysis, the pentose phosphate cycle, and glycogen synthesis in liver. The protein is Insulin (INS) of Proechimys guairae (Guaira spiny rat).